Here is a 151-residue protein sequence, read N- to C-terminus: Ribosomal RNA large subunit methyltransferase H (151 aa).

Residues Leu73, Gly100, and 119-124 (LSKMTL) each bind S-adenosyl-L-methionine.

This sequence belongs to the RNA methyltransferase RlmH family. As to quaternary structure, homodimer.

The protein resides in the cytoplasm. It carries out the reaction pseudouridine(1915) in 23S rRNA + S-adenosyl-L-methionine = N(3)-methylpseudouridine(1915) in 23S rRNA + S-adenosyl-L-homocysteine + H(+). Its function is as follows. Specifically methylates the pseudouridine at position 1915 (m3Psi1915) in 23S rRNA. This chain is Ribosomal RNA large subunit methyltransferase H, found in Campylobacter lari (strain RM2100 / D67 / ATCC BAA-1060).